The sequence spans 355 residues: Countin-like protein (355 aa).

A signal peptide spans 1-27; sequence MNKSLFSLILLIITIFNLASNINIVSA. The disordered stretch occupies residues 63 to 83; it reads NNHEDNNNNNNNNNNNNNAYN. A compositionally biased stretch (low complexity) spans 69–83; that stretch reads NNNNNNNNNNNNAYN. Residues 93–177 form the Saposin B-type domain; that stretch reads GDIECVVCLD…ELITACSTPK (85 aa). Cystine bridges form between cysteine 97-cysteine 173, cysteine 100-cysteine 167, and cysteine 128-cysteine 140. N-linked (GlcNAc...) asparagine glycans are attached at residues asparagine 132, asparagine 209, asparagine 242, asparagine 253, asparagine 254, asparagine 282, and asparagine 303. Residues 290–355 are disordered; that stretch reads ISNPTPTPTP…SSHYKNKINK (66 aa). Residues 301 to 342 are compositionally biased toward low complexity; it reads PSNSTTPTPTPTNSTPTPTSTSTPTSTPTSTPTPTPTSSSST. The segment covering 345–355 has biased composition (basic residues); sequence HSSHYKNKINK.

It belongs to the countin family.

Its subcellular location is the secreted. The sequence is that of Countin-like protein from Dictyostelium discoideum (Social amoeba).